A 388-amino-acid polypeptide reads, in one-letter code: Coproporphyrin III ferrochelatase (388 aa).

2 residues coordinate Fe-coproporphyrin III: Ser-59 and Tyr-124. His-186 and Glu-276 together coordinate Fe(2+). The tract at residues Gln-349–Asp-369 is disordered.

This sequence belongs to the ferrochelatase family.

The protein resides in the cytoplasm. The catalysed reaction is Fe-coproporphyrin III + 2 H(+) = coproporphyrin III + Fe(2+). It functions in the pathway porphyrin-containing compound metabolism; protoheme biosynthesis. Involved in coproporphyrin-dependent heme b biosynthesis. Catalyzes the insertion of ferrous iron into coproporphyrin III to form Fe-coproporphyrin III. The sequence is that of Coproporphyrin III ferrochelatase from Frankia alni (strain DSM 45986 / CECT 9034 / ACN14a).